Consider the following 576-residue polypeptide: Arginine--tRNA ligase (576 aa).

The 'HIGH' region motif lies at 122–132; the sequence is PNVAKEMHVGH.

It belongs to the class-I aminoacyl-tRNA synthetase family. Monomer.

It is found in the cytoplasm. It catalyses the reaction tRNA(Arg) + L-arginine + ATP = L-arginyl-tRNA(Arg) + AMP + diphosphate. This Photobacterium profundum (strain SS9) protein is Arginine--tRNA ligase.